A 303-amino-acid polypeptide reads, in one-letter code: Guanosine-inosine kinase (303 aa).

This sequence belongs to the carbohydrate kinase PfkB family. Homodimer. Mg(2+) serves as cofactor.

It catalyses the reaction guanosine + ATP = GMP + ADP + H(+). The enzyme catalyses inosine + ATP = IMP + ADP + H(+). The protein operates within purine metabolism; IMP biosynthesis via salvage pathway; IMP from inosine: step 1/1. Its pathway is purine metabolism; GMP biosynthesis via salvage pathway. Kinase activity is stimulated by pyrimidine nucleotides, especially CMP and CTP, and inhibited by AMP, ADP and GMP. Activity is stimulated by potassium or ammonium ions. Its function is as follows. Catalyzes the phosphorylation of guanosine and inosine to GMP and IMP, respectively. Can also use deoxyguanosine. Shows a strong preference for guanosine. dATP, GTP and dGTP can serve as phosphate donors. The sequence is that of Guanosine-inosine kinase from Exiguobacterium acetylicum (Brevibacterium acetylicum).